The following is a 412-amino-acid chain: MHKLFAVRSLSSAIVKSFKSLQNQQAAFSTSLLLDDTQKQFKESVAKFAQENIAPYAEKIDRTNSFPKEINLWKLMGDFNLHGITAPEEYGGLNLGYLYHCIALEEISRASGAVAVSYGVQSNVCINQLVRNGTPDQKQKYLPKLISGDHIGALAMSEPNAGSDVVSMKCRADRVDGGYVLNGNKMWCTNGPVANTLIVYAKTDTTAGSKGITAFIIEKEMPGFSTAQKLDKLGMRGSDTCELVFENCFVPNENVLGQEGKGVYVLMSGLDLERLVLAAGPVGIMQACMDIVIPYVRQREQFGRPIGEFQLIQGKLADMYTALQSSRSYVYAVAKDCDNGKIDPKDCSGTILLAAERATQVALQAIQCLGGNGYINEYPTGRLLRDAKMYEIAAGTSEIRRLVIGRELFKHQ.

Residues 1 to 25 (MHKLFAVRSLSSAIVKSFKSLQNQQ) constitute a mitochondrion transit peptide. FAD is bound by residues 154–163 (LAMSEPNAGS) and 187–189 (WCT). Serine 163 provides a ligand contact to substrate. Residues 209–210 (SK), tyrosine 264, and 271–274 (DLER) contribute to the substrate site. Glutamate 273 functions as the Proton acceptor in the catalytic mechanism. FAD-binding positions include arginine 299, glutamine 310, and 367-371 (QCLGG). Position 394 to 395 (394 to 395 (AG)) interacts with substrate. 396 to 398 (TSE) serves as a coordination point for FAD.

This sequence belongs to the acyl-CoA dehydrogenase family. As to quaternary structure, homotetramer. Requires FAD as cofactor. Expressed in flowers.

Its subcellular location is the mitochondrion. It carries out the reaction 2-methylbutanoyl-CoA + oxidized [electron-transfer flavoprotein] + H(+) = (2E)-2-methylbut-2-enoyl-CoA + reduced [electron-transfer flavoprotein]. In terms of biological role, short/branched-chain acyl-CoA dehydrogenase (SBCAD). Uses 2-methylbutanoyl-CoA as substrate. Minor activity with the straight-chain substrates, butanoyl-CoA, valeryl-CoA, hexanoyl-CoA, and octanoyl-CoA but no activity with isovaleryl-CoA. The sequence is that of 2-methylacyl-CoA dehydrogenase, mitochondrial (2MBCD) from Solanum tuberosum (Potato).